Consider the following 252-residue polypeptide: MIRRYLYTFLLVMTLAGCKDKDLLKGLDQEQANEVIAVLQMHNIEANKIDSGKLGYSITVAEPDFTAAVYWIKTYQLPPRPRVEIAQMFPADSLVSSPRAEKARLYSAIEQRLEQSLQTMEGVLSARVHISYDIDAGENGRPPKPVHLSALAVYERGSPLAHQISDIKRFLKNSFADVDYDNISVVLSERSDAQLQAPGTPVKRNSFATSWIVLIILLSVMSAGFGVWYYKNHYARNKKGITADDKAKSSNE.

A signal peptide spans 1-17; the sequence is MIRRYLYTFLLVMTLAG. Residue C18 is the site of N-palmitoyl cysteine attachment. A lipid anchor (S-diacylglycerol cysteine) is attached at C18. A helical membrane pass occupies residues 207-227; sequence FATSWIVLIILLSVMSAGFGV.

This sequence belongs to the YscJ lipoprotein family.

Its subcellular location is the cell outer membrane. Its function is as follows. Required for invasion of epithelial cells. Could be involved in protein secretion. This Salmonella typhimurium (strain LT2 / SGSC1412 / ATCC 700720) protein is Lipoprotein PrgK (prgK).